We begin with the raw amino-acid sequence, 346 residues long: Propane 2-monooxygenase, reductase component (346 aa).

The 2Fe-2S ferredoxin-type domain occupies 5-94; the sequence is HKISFEPVDI…DCEIELLNFD (90 aa). 4 residues coordinate [2Fe-2S] cluster: Cys-39, Cys-44, Cys-46, and Cys-78. The region spanning 104–205 is the FAD-binding FR-type domain; it reads IQDVTTKVAA…NGPYGSCTLR (102 aa).

The protein belongs to the bacterial ring-hydroxylating dioxygenase ferredoxin reductase family. As to quaternary structure, the propane 2-monooxygenase multicomponent enzyme system is composed of an electron transfer component and a monooxygenase component interacting with the effector protein PrmD. The electron transfer component is composed of a reductase (PrmB), and the monooxygenase component is formed by a large subunit (PrmA) and a small subunit (PrmC). Requires FAD as cofactor. The cofactor is [2Fe-2S] cluster.

Reductase component of the propane 2-monooxygenase multicomponent enzyme system which is involved in the degradation of propane via the O2-dependent hydroxylation of propane. Reductase catalyzes the transfer of electrons from NADH or NADPH to monooxygenase. This chain is Propane 2-monooxygenase, reductase component, found in Gordonia sp. (strain TY-5).